The sequence spans 415 residues: MIDKKLLLQDFEMVALSLKKRNNAMDDALERLREVITHYKKQLIELEGLQAFQNKVSKEFGIKMAQKVDTSDLKKELENNKIKLNELSKSVGELEQQIDLRLSIIPNLVDEKTPLGASEEDNIEIKKILTPRNFTFKPKEHFELAQQNGWIDFESGVKLAKSRFSVIRGFGAKIYRALIHLMLDFNEKNGFEIIYTPALVNEKMLFGTGQLPKFKEDVFKIENENLYLIPTAEVTLTNLYNDTIVSVEKLPIKMTAHTPCFRSEAGSAGKDTRGMIRQHQFDKVELVAITHPKESDAMQEHMLESASEILKALELPHRFVQLCSADLGFSASNTIDIEVWLPGQNCYREISSVSNTRDFQARRAKIRFKENQKNQLAHTLNGSSLAVGRTMVALMENHQQADGSIHIPKALEKYL.

Residue 231–233 (TAE) coordinates L-serine. An ATP-binding site is contributed by 262–264 (RSE). An L-serine-binding site is contributed by glutamate 285. ATP is bound at residue 349-352 (EISS). Serine 383 is an L-serine binding site.

Belongs to the class-II aminoacyl-tRNA synthetase family. Type-1 seryl-tRNA synthetase subfamily. Homodimer. The tRNA molecule binds across the dimer.

The protein localises to the cytoplasm. It carries out the reaction tRNA(Ser) + L-serine + ATP = L-seryl-tRNA(Ser) + AMP + diphosphate + H(+). The enzyme catalyses tRNA(Sec) + L-serine + ATP = L-seryl-tRNA(Sec) + AMP + diphosphate + H(+). Its pathway is aminoacyl-tRNA biosynthesis; selenocysteinyl-tRNA(Sec) biosynthesis; L-seryl-tRNA(Sec) from L-serine and tRNA(Sec): step 1/1. Catalyzes the attachment of serine to tRNA(Ser). Is also able to aminoacylate tRNA(Sec) with serine, to form the misacylated tRNA L-seryl-tRNA(Sec), which will be further converted into selenocysteinyl-tRNA(Sec). The polypeptide is Serine--tRNA ligase (Helicobacter pylori (strain Shi470)).